Reading from the N-terminus, the 61-residue chain is Sperm protamine P1 (61 aa).

The tract at residues 1–61 (MARYRHSRSR…RYSRRRRRRY (61 aa)) is disordered.

Belongs to the protamine P1 family. In terms of tissue distribution, testis.

The protein resides in the nucleus. Its subcellular location is the chromosome. Protamines substitute for histones in the chromatin of sperm during the haploid phase of spermatogenesis. They compact sperm DNA into a highly condensed, stable and inactive complex. In Setonix brachyurus (Quokka), this protein is Sperm protamine P1 (PRM1).